The primary structure comprises 876 residues: Alanine--tRNA ligase (876 aa).

Zn(2+)-binding residues include H564, H568, C666, and H670.

Belongs to the class-II aminoacyl-tRNA synthetase family. As to quaternary structure, homotetramer. Zn(2+) is required as a cofactor.

Its subcellular location is the cytoplasm. The catalysed reaction is tRNA(Ala) + L-alanine + ATP = L-alanyl-tRNA(Ala) + AMP + diphosphate. Catalyzes the attachment of alanine to tRNA(Ala) in a two-step reaction: alanine is first activated by ATP to form Ala-AMP and then transferred to the acceptor end of tRNA(Ala). Also edits incorrectly charged Ser-tRNA(Ala) and Gly-tRNA(Ala) via its editing domain. The chain is Alanine--tRNA ligase from Salmonella paratyphi A (strain ATCC 9150 / SARB42).